We begin with the raw amino-acid sequence, 699 residues long: SPX domain-containing membrane protein At4g22990 (699 aa).

One can recognise an SPX domain in the interval 2–145; it reads VAFGKKLKER…GYRFTNYYVK (144 aa). The next 6 membrane-spanning stretches (helical) occupy residues 249–269, 280–300, 317–337, 339–358, 377–397, and 413–433; these read FMSL…TYII, LGAA…AQLF, LIFS…AFDF, SIAV…ARAV, AGFV…AGLL, and LPGW…AISF. A compositionally biased stretch (acidic residues) spans 475–490; it reads IEEQGEDECDGSEEAS. Residues 475 to 494 are disordered; it reads IEEQGEDECDGSEEASEDSR. The next 5 membrane-spanning stretches (helical) occupy residues 515–535, 546–566, 578–598, 606–626, and 671–691; these read LLIY…SSVI, SVAI…LVVG, ILLV…HVVV, VCSG…NLSL, and MLLN…IVAT.

The protein belongs to the major facilitator superfamily.

It is found in the membrane. In Arabidopsis thaliana (Mouse-ear cress), this protein is SPX domain-containing membrane protein At4g22990.